The chain runs to 157 residues: uncharacterized protein (157 aa).

The stretch at 36 to 63 (QIEELNELCQFFNISLTYTRESLEELEN) forms a coiled coil.

This is an uncharacterized protein from Bacillus subtilis (strain 168).